The following is a 209-amino-acid chain: Mitochondrial import inner membrane translocase subunit Tim23 (209 aa).

The next 3 membrane-spanning stretches (helical) occupy residues Phe-73–Met-93, Ala-125–Ile-145, and Gly-172–Tyr-194.

It belongs to the Tim17/Tim22/Tim23 family. As to quaternary structure, component of the TIM23 complex at least composed of TIMM23, TIMM17 (TIMM17A or TIMM17B) and TIMM50; within this complex, directly interacts with TIMM50. The complex interacts with the TIMM44 component of the PAM complex and with DNAJC15. Upon mitochondrial depolarization, interacts with PINK1; the interaction is required for PINK1 accumulation at the outer mitochondrial membrane, kinase activation by autophosphorylation and PRKN recruitement to mitochondria.

The protein localises to the mitochondrion inner membrane. Functionally, essential component of the TIM23 complex, a complex that mediates the translocation of transit peptide-containing proteins across the mitochondrial inner membrane. Has a role in the activation of stress-induced mitophagy by protecting PINK1 from OMA1-mediated degradation and facilitating its accumulation at the outer mitochondrial membrane in response to depolarization. The chain is Mitochondrial import inner membrane translocase subunit Tim23 (TIMM23) from Bos taurus (Bovine).